A 983-amino-acid chain; its full sequence is UPF0182 protein CMM_1204 (983 aa).

7 helical membrane-spanning segments follow: residues 16-36 (LAIT…FAGF), 56-76 (WGAG…PVFV), 108-128 (LAMF…ASSG), 161-181 (FYHA…LGVL), 205-225 (IQIA…IWLD), 255-275 (AILA…AVIG), and 281-301 (IIGT…YPAI). A compositionally biased stretch (polar residues) spans 699 to 714 (QDLWTTPNDPTATTEA). Disordered stretches follow at residues 699 to 718 (QDLW…GTPA) and 884 to 936 (DSGA…AQDV). The segment covering 902-918 (GGTGDGATDGATDGGTG) has biased composition (gly residues). Positions 919–933 (STPTPAPTTSPSAPA) are enriched in low complexity.

The protein belongs to the UPF0182 family.

Its subcellular location is the cell membrane. This is UPF0182 protein CMM_1204 from Clavibacter michiganensis subsp. michiganensis (strain NCPPB 382).